The following is a 94-amino-acid chain: Large ribosomal subunit protein bL25 (94 aa).

The protein belongs to the bacterial ribosomal protein bL25 family. Part of the 50S ribosomal subunit; part of the 5S rRNA/L5/L18/L25 subcomplex. Contacts the 5S rRNA. Binds to the 5S rRNA independently of L5 and L18.

Its function is as follows. This is one of the proteins that binds to the 5S RNA in the ribosome where it forms part of the central protuberance. The polypeptide is Large ribosomal subunit protein bL25 (Escherichia coli O157:H7).